Here is a 212-residue protein sequence, read N- to C-terminus: Pyrrolidone-carboxylate peptidase (212 aa).

Residues E80, C143, and H165 contribute to the active site.

The protein belongs to the peptidase C15 family. Homotetramer.

The protein resides in the cytoplasm. The catalysed reaction is Release of an N-terminal pyroglutamyl group from a polypeptide, the second amino acid generally not being Pro.. Its function is as follows. Removes 5-oxoproline from various penultimate amino acid residues except L-proline. The polypeptide is Pyrrolidone-carboxylate peptidase (Vibrio vulnificus (strain CMCP6)).